A 631-amino-acid polypeptide reads, in one-letter code: DNA mismatch repair protein MutL (631 aa).

Belongs to the DNA mismatch repair MutL/HexB family.

Its function is as follows. This protein is involved in the repair of mismatches in DNA. It is required for dam-dependent methyl-directed DNA mismatch repair. May act as a 'molecular matchmaker', a protein that promotes the formation of a stable complex between two or more DNA-binding proteins in an ATP-dependent manner without itself being part of a final effector complex. The polypeptide is DNA mismatch repair protein MutL (Lactobacillus acidophilus (strain ATCC 700396 / NCK56 / N2 / NCFM)).